The chain runs to 374 residues: Centrosomal protein of 41 kDa (374 aa).

Residues 176 to 273 form the Rhodanese domain; it reads PDCPYLLLDV…VAQKFPEGMT (98 aa). Disordered regions lie at residues 279–301 and 329–374; these read ISCLPSPTGPAGRKRSAQHQTSQ and ETSS…RPWK. Low complexity predominate over residues 329-349; that stretch reads ETSSRLSSRMSTSSARSKAST.

Belongs to the CEP41 family. Expressed in various ciliary organs, including Kupffer's vesicle, ear and heart, as well as brain and kidney.

It is found in the cytoplasm. Its subcellular location is the cytoskeleton. The protein resides in the microtubule organizing center. It localises to the centrosome. The protein localises to the cell projection. It is found in the cilium. Its subcellular location is the cilium basal body. Required during ciliogenesis for tubulin glutamylation in cilium. Probably acts by participating in the transport of tubulin polyglutamylases between the basal body and the cilium. In Danio rerio (Zebrafish), this protein is Centrosomal protein of 41 kDa (cep41).